Reading from the N-terminus, the 134-residue chain is MSWQAYVDDHLMCDIEGHEDHRLTAAAIVGHDGSVWAQSATFPQFKPVEMNGIMTDFNEPGHLAPTGLHLGGTKYMVIQGEAGAVIRGKKGSGGITIKKTGQALVFGIYEEPVTPGQCNMVVERLGDYLIEQGL.

Cysteine 13 and cysteine 118 form a disulfide bridge. The Involved in PIP2 interaction signature appears at 84–100 (AVIRGKKGSGGITIKKT). Threonine 114 is subject to Phosphothreonine.

This sequence belongs to the profilin family. As to quaternary structure, occurs in many kinds of cells as a complex with monomeric actin in a 1:1 ratio. Post-translationally, phosphorylated by MAP kinases.

Its subcellular location is the cytoplasm. It is found in the cytoskeleton. Functionally, binds to actin and affects the structure of the cytoskeleton. At high concentrations, profilin prevents the polymerization of actin, whereas it enhances it at low concentrations. This is Profilin-4 from Olea europaea (Common olive).